A 119-amino-acid polypeptide reads, in one-letter code: Small ribosomal subunit protein uS13 (119 aa).

Basic residues predominate over residues 92 to 110 (RKDTCKRSTKKNARTRKGP). The interval 92 to 119 (RKDTCKRSTKKNARTRKGPKKDNRWKER) is disordered.

Belongs to the universal ribosomal protein uS13 family. In terms of assembly, part of the 30S ribosomal subunit. Forms a loose heterodimer with protein S19. Forms two bridges to the 50S subunit in the 70S ribosome.

Located at the top of the head of the 30S subunit, it contacts several helices of the 16S rRNA. In the 70S ribosome it contacts the 23S rRNA (bridge B1a) and protein L5 of the 50S subunit (bridge B1b), connecting the 2 subunits; these bridges are implicated in subunit movement. Contacts the tRNAs in the A and P-sites. The protein is Small ribosomal subunit protein uS13 of Mycoplasma sp.